Consider the following 302-residue polypeptide: Probable lipid kinase YegS-like (302 aa).

One can recognise a DAGKc domain in the interval M1–L129. Residues T39, G65–E71, and T92 contribute to the ATP site. Positions 210, 213, and 215 each coordinate Mg(2+). E268 acts as the Proton acceptor in catalysis.

The protein belongs to the diacylglycerol/lipid kinase family. YegS lipid kinase subfamily. It depends on Mg(2+) as a cofactor. Ca(2+) is required as a cofactor.

The protein localises to the cytoplasm. Functionally, probably phosphorylates lipids; the in vivo substrate is unknown. In Pseudomonas aeruginosa (strain ATCC 15692 / DSM 22644 / CIP 104116 / JCM 14847 / LMG 12228 / 1C / PRS 101 / PAO1), this protein is Probable lipid kinase YegS-like.